Consider the following 297-residue polypeptide: 4-hydroxy-tetrahydrodipicolinate synthase (297 aa).

Residue T49 participates in pyruvate binding. Y137 (proton donor/acceptor) is an active-site residue. Residue K166 is the Schiff-base intermediate with substrate of the active site. Position 208 (I208) interacts with pyruvate.

It belongs to the DapA family. In terms of assembly, homotetramer; dimer of dimers.

Its subcellular location is the cytoplasm. It carries out the reaction L-aspartate 4-semialdehyde + pyruvate = (2S,4S)-4-hydroxy-2,3,4,5-tetrahydrodipicolinate + H2O + H(+). It functions in the pathway amino-acid biosynthesis; L-lysine biosynthesis via DAP pathway; (S)-tetrahydrodipicolinate from L-aspartate: step 3/4. Functionally, catalyzes the condensation of (S)-aspartate-beta-semialdehyde [(S)-ASA] and pyruvate to 4-hydroxy-tetrahydrodipicolinate (HTPA). In Prosthecochloris aestuarii (strain DSM 271 / SK 413), this protein is 4-hydroxy-tetrahydrodipicolinate synthase.